The primary structure comprises 284 residues: uncharacterized protein (284 aa).

Residues 4–133 (PLHLFWHRRD…AVHRQWDQLL (130 aa)) enclose the Photolyase/cryptochrome alpha/beta domain.

This is an uncharacterized protein from Synechococcus sp. (strain PCC 6716).